Reading from the N-terminus, the 301-residue chain is F-box protein At4g02733 (301 aa).

The region spanning 91-146 (NSISWFLPSELTVKVFSMVDTKSLMQASACCTMFNNCAMDPLCYFHIDLTKAFKHV) is the F-box domain.

The polypeptide is F-box protein At4g02733 (Arabidopsis thaliana (Mouse-ear cress)).